Here is a 560-residue protein sequence, read N- to C-terminus: Membrane protein insertase YidC (560 aa).

Helical transmembrane passes span 5-25 (IINL…WQYF), 334-354 (AIDF…MNFF), 357-377 (YVGN…LLMF), 431-451 (LPIL…YVTI), 476-496 (LFGL…WPIL), and 522-542 (FMPL…LIYW).

The protein belongs to the OXA1/ALB3/YidC family. Type 1 subfamily. In terms of assembly, interacts with the Sec translocase complex via SecD. Specifically interacts with transmembrane segments of nascent integral membrane proteins during membrane integration.

Its subcellular location is the cell inner membrane. Required for the insertion and/or proper folding and/or complex formation of integral membrane proteins into the membrane. Involved in integration of membrane proteins that insert both dependently and independently of the Sec translocase complex, as well as at least some lipoproteins. Aids folding of multispanning membrane proteins. In Rickettsia conorii (strain ATCC VR-613 / Malish 7), this protein is Membrane protein insertase YidC.